We begin with the raw amino-acid sequence, 296 residues long: ATP synthase gamma chain (296 aa).

This sequence belongs to the ATPase gamma chain family. As to quaternary structure, F-type ATPases have 2 components, CF(1) - the catalytic core - and CF(0) - the membrane proton channel. CF(1) has five subunits: alpha(3), beta(3), gamma(1), delta(1), epsilon(1). CF(0) has three main subunits: a, b and c.

It is found in the cell inner membrane. In terms of biological role, produces ATP from ADP in the presence of a proton gradient across the membrane. The gamma chain is believed to be important in regulating ATPase activity and the flow of protons through the CF(0) complex. The polypeptide is ATP synthase gamma chain (Gluconobacter oxydans (strain 621H) (Gluconobacter suboxydans)).